A 709-amino-acid polypeptide reads, in one-letter code: Ral guanine nucleotide dissociation stimulator-like 3 (709 aa).

Residues 26–55 (VYSVSLRRQRSQRSTPERSGEGQTPIPATD) form a disordered region. The N-terminal Ras-GEF domain occupies 64–201 (KVRALRAARL…LLEDFLKEAK (138 aa)). Disordered regions lie at residues 203 to 225 (EQTEEEKRLAWSGPPRIAQTPGS), 395 to 416 (SQEETTEDDDCPSGSLPSKLPP), and 502 to 604 (PPAA…SRVP). The Ras-GEF domain maps to 248–503 (SVDDVAEQLT…YRVSRVIEPP (256 aa)). Composition is skewed to low complexity over residues 502-511 (PPAASCPSSP) and 533-551 (SSPGGSPGDPSSPTSSVSP). Phosphoserine is present on residues Ser-506 and Ser-510. Residues 552–576 (GSPPSSPRNREPPPPGSPPASPGPQ) show a composition bias toward pro residues. Residues Ser-553, Ser-568, Ser-572, Ser-577, and Ser-600 each carry the phosphoserine modification. The tract at residues 611 to 706 (SEARVIRVSI…KEGTGHTLSA (96 aa)) is interaction with HRAS, MRAS and RIT1. Positions 612-699 (EARVIRVSIN…GDFLLRRKEG (88 aa)) constitute a Ras-associating domain.

In terms of assembly, interacts with GTP-bound forms of RIT1, HRAS and MRAS. As to expression, widely expressed. Expressed at high levels in the liver and kidney.

Functionally, guanine nucleotide exchange factor (GEF) for Ral-A. Potential effector of GTPase HRas and Ras-related protein M-Ras. Negatively regulates Elk-1-dependent gene induction downstream of HRas and MEKK1. This is Ral guanine nucleotide dissociation stimulator-like 3 (Rgl3) from Mus musculus (Mouse).